The sequence spans 312 residues: Ribosomal protein L11 methyltransferase (312 aa).

Residues Thr162, Gly183, Asp205, and Asn248 each coordinate S-adenosyl-L-methionine.

Belongs to the methyltransferase superfamily. PrmA family.

The protein localises to the cytoplasm. It carries out the reaction L-lysyl-[protein] + 3 S-adenosyl-L-methionine = N(6),N(6),N(6)-trimethyl-L-lysyl-[protein] + 3 S-adenosyl-L-homocysteine + 3 H(+). Its function is as follows. Methylates ribosomal protein L11. In Bacillus anthracis (strain A0248), this protein is Ribosomal protein L11 methyltransferase.